Consider the following 394-residue polypeptide: Enoyl-CoA delta isomerase 2 (394 aa).

The N-terminal 38 residues, 1–38 (MAMAYLAWRLARRSCPSSLQVTSFPVVQLHMNRTAMRA), are a transit peptide targeting the mitochondrion. The region spanning 39 to 124 (SQKDFENSMN…VSSLSPSLES (86 aa)) is the ACB domain. Lys51 carries the N6-acetyllysine; alternate modification. Residue Lys51 is modified to N6-succinyllysine; alternate. N6-succinyllysine is present on Lys55. Lys62 carries the N6-acetyllysine; alternate modification. N6-succinyllysine; alternate is present on Lys62. An an acyl-CoA-binding site is contributed by 66 to 70 (YALYK). Lys70, Lys81, and Lys90 each carry N6-succinyllysine. At Lys92 the chain carries N6-acetyllysine; alternate. Lys92 carries the N6-succinyllysine; alternate modification. Lys92 lines the an acyl-CoA pocket. A Phosphoserine modification is found at Ser101. An acyl-CoA is bound at residue Tyr111. Ser119 is subject to Phosphoserine. An ECH-like region spans residues 151–322 (TKIMFNRPKK…AQGLVTEVFP (172 aa)). Lys161 is modified (N6-succinyllysine). 198 to 202 (SGNDL) provides a ligand contact to substrate. Lys289 is modified (N6-succinyllysine). The short motif at 392-394 (SKL) is the Microbody targeting signal element.

In the C-terminal section; belongs to the enoyl-CoA hydratase/isomerase family. Abundant in heart, skeletal muscle and liver. Expressed in CD34(+) T-cells and CD34(+) bone marrow cells.

Its subcellular location is the mitochondrion. It is found in the peroxisome matrix. The enzyme catalyses a (3Z)-enoyl-CoA = a 4-saturated (2E)-enoyl-CoA. The catalysed reaction is (3Z)-octenoyl-CoA = (2E)-octenoyl-CoA. It carries out the reaction a (3E)-enoyl-CoA = a 4-saturated (2E)-enoyl-CoA. It catalyses the reaction (2E)-tetradecenoyl-CoA = (3Z)-tetradecenoyl-CoA. The enzyme catalyses (3E)-tetradecenoyl-CoA = (2E)-tetradecenoyl-CoA. The catalysed reaction is (3E)-octenoyl-CoA = (2E)-octenoyl-CoA. It carries out the reaction (3E)-nonenoyl-CoA = (2E)-nonenoyl-CoA. It functions in the pathway lipid metabolism; fatty acid beta-oxidation. Its function is as follows. Able to isomerize both 3-cis and 3-trans double bonds into the 2-trans form in a range of enoyl-CoA species. Has a preference for 3-trans substrates. The polypeptide is Enoyl-CoA delta isomerase 2 (ECI2) (Homo sapiens (Human)).